Consider the following 880-residue polypeptide: Paramyosin (880 aa).

A nonhelical region region spans residues 1–34 (MSGSLYRSPSAALYKSPSMSAFGGLPAAFGSMSV). Residues 35–859 (ADLGSLTRLE…LIRAKHRHQL (825 aa)) are a coiled coil. A nonhelical region region spans residues 860 to 880 (LRAKMLQRQKFTFSKMSNRDN).

The protein belongs to the paramyosin family. As to quaternary structure, homodimer.

It localises to the cytoplasm. Its subcellular location is the myofibril. Functionally, paramyosin is a major structural component of many thick filaments isolated from invertebrate muscles. The polypeptide is Paramyosin (Brugia malayi (Filarial nematode worm)).